The primary structure comprises 815 residues: Lon protease 1 (815 aa).

Residues 14–211 (IAILPLLGTV…KLNEVLTREL (198 aa)) form the Lon N-terminal domain. Residue 370–377 (GPPGVGKT) coordinates ATP. In terms of domain architecture, Lon proteolytic spans 606–787 (TDRPGIVTGL…GQVIELALRA (182 aa)). Catalysis depends on residues Ser-693 and Lys-736.

It belongs to the peptidase S16 family. In terms of assembly, homohexamer. Organized in a ring with a central cavity.

It localises to the cytoplasm. The catalysed reaction is Hydrolysis of proteins in presence of ATP.. ATP-dependent serine protease that mediates the selective degradation of mutant and abnormal proteins as well as certain short-lived regulatory proteins. Required for cellular homeostasis and for survival from DNA damage and developmental changes induced by stress. Degrades polypeptides processively to yield small peptide fragments that are 5 to 10 amino acids long. Binds to DNA in a double-stranded, site-specific manner. In Herpetosiphon aurantiacus (strain ATCC 23779 / DSM 785 / 114-95), this protein is Lon protease 1.